Here is a 193-residue protein sequence, read N- to C-terminus: T-cell receptor-associated transmembrane adapter 1 (193 aa).

Residues 1–10 (MSGNAECHFS) are Extracellular-facing. A helical; Signal-anchor for type III membrane protein membrane pass occupies residues 11 to 31 (IWAILAFLGLALTISLIFNIF). The Cytoplasmic portion of the chain corresponds to 32–193 (HCVEKQRQEK…LHSLDYDLAQ (162 aa)). At S46 the chain carries Phosphoserine. Y80 is subject to Phosphotyrosine. The tract at residues 80–83 (YEQM) is interaction with PIK3R1. The interval 116 to 166 (NEGKRRKPRKQKSHLSDKDEEGQMHAKDISLSKTTLVDSYPPESEAIEENI) is disordered. Residues 119 to 128 (KRRKPRKQKS) are compositionally biased toward basic residues. Residues 129 to 145 (HLSDKDEEGQMHAKDIS) show a composition bias toward basic and acidic residues.

As to quaternary structure, homodimer; disulfide-linked. Interacts with CD3Z. When phosphorylated, interacts with PIK3R1. In terms of processing, phosphorylated on tyrosines upon TCR activation.

It is found in the cell membrane. In terms of biological role, stabilizes the TCR (T-cell antigen receptor)/CD3 complex at the surface of T-cells. The chain is T-cell receptor-associated transmembrane adapter 1 (TRAT1) from Bos taurus (Bovine).